The chain runs to 580 residues: Viral transcription factor IE2 (580 aa).

Over residues 1–11 the composition is skewed to basic and acidic residues; that stretch reads MESSAKRKMDP. 2 disordered regions span residues 1-30 and 99-161; these read MESSAKRKMDPDNPDEGPSSKVPRPETPVT and DSSS…VIIK. The span at 99 to 133 shows a compositional bias: polar residues; that stretch reads DSSSTGPTLTTHSCSVSSAPLNKPTPTSVAVTNTP. Glycyl lysine isopeptide (Lys-Gly) (interchain with G-Cter in SUMO) cross-links involve residues Lys-175 and Lys-180. The SUMO-interacting motif 1/SIM1 signature appears at 199 to 202; that stretch reads CIVI. The interval 200-208 is non-covalent SUMO1 binding region (SIM); sequence IVISDSEEE. 2 positions are modified to phosphoserine: Ser-203 and Ser-205. Residues 206–336 form a disordered region; that stretch reads EEEQGEEVET…SKRISELDNE (131 aa). 3 stretches are compositionally biased toward low complexity: residues 216 to 236, 259 to 271, and 302 to 317; these read RGATASSPSTGSGTPRVTSPT, SSSSSSSCSSASD, and AASSSLLSCGHQSSGG. The SUMO-interacting motif 1/SIM2 signature appears at 410-413; that stretch reads IQII. Residues 501 to 504 carry the SUMO-interacting motif 1/SIM3 motif; the sequence is VDLL.

Belongs to the HHV-5 IE2 protein family. In terms of assembly, interacts with host SUMO-modified form of TATA-binding protein (TBP)-associated factor 12/TAF12 in a SIM-dependent manner; this interaction increases the transactivation activity of IE2. Interacts with host CHAF1A. Interacts with several components of the host transcriptional machinery including TBP, TF2B and CREB1. Interacts with host DNA replication licensing factor MCM3. Interacts with host PLSCR1; this interaction inhibits IE2 transactivating activity. In terms of processing, phosphorylated by host CK2 at Ser-203 and Ser-205; leading to enhanced SUMOylation. Post-translationally, SUMOylated; SUMOylation is enhanced when IE2 is phosphorylated by host CK2. The sumoylation is necessary for efficient replication of the virus and thus for the function of this viral transcription factor.

It is found in the host nucleus. In terms of biological role, stimulates viral early and late gene expression and thus play a crucial role in the regulation of productive infection. Selectively drives host RNA Pol II transcription initiation at a subset of viral early-late and late promoters without substantially affecting Pol II transcription of expressed host genes. Mechanistically, forms a repressive complex at the major immediate-early promoter region involving direct association with host nucleosomes and TBP. Concerning activation, stimulates transcription by binding nearby, but not within, core promoter regions. In addition, activates quiescent cells to reenter the cell cycle and up-regulates several E2F-responsive genes, which are responsible for pushing the cell into S phase. In S-phase, inhibits cellular DNA synthesis and blocks further cell cycle progression. The protein is Viral transcription factor IE2 (UL122) of Homo sapiens (Human).